The sequence spans 179 residues: Exosome complex component Csl4 (179 aa).

The S1 motif domain maps to 58–137 (GDVVLGRVVD…RLSTKEEEMG (80 aa)). The Zn(2+) site is built by cysteine 143, cysteine 146, cysteine 159, and cysteine 162.

It belongs to the CSL4 family. Component of the archaeal exosome complex. Forms a trimer of Rrp4 and/or Csl4 subunits. The trimer associates with a hexameric ring-like arrangement composed of 3 Rrp41-Rrp42 heterodimers. Interacts with DnaG.

Its subcellular location is the cytoplasm. Functionally, non-catalytic component of the exosome, which is a complex involved in RNA degradation. Increases the RNA binding and the efficiency of RNA degradation. Helpful for the interaction of the exosome with A-poor RNAs. The sequence is that of Exosome complex component Csl4 from Archaeoglobus fulgidus (strain ATCC 49558 / DSM 4304 / JCM 9628 / NBRC 100126 / VC-16).